Consider the following 334-residue polypeptide: Trans-1,2-dihydrobenzene-1,2-diol dehydrogenase (334 aa).

Belongs to the Gfo/Idh/MocA family. In terms of assembly, homodimer.

It carries out the reaction (1R,2R)-1,2-dihydrobenzene-1,2-diol + NADP(+) = catechol + NADPH + H(+). The catalysed reaction is D-xylose + NADP(+) = D-xylono-1,5-lactone + NADPH + H(+). The protein is Trans-1,2-dihydrobenzene-1,2-diol dehydrogenase (dhdh) of Danio rerio (Zebrafish).